Here is a 461-residue protein sequence, read N- to C-terminus: A-type ATP synthase subunit B (461 aa).

The protein belongs to the ATPase alpha/beta chains family. Has multiple subunits with at least A(3), B(3), C, D, E, F, H, I and proteolipid K(x).

The protein localises to the cell membrane. Functionally, component of the A-type ATP synthase that produces ATP from ADP in the presence of a proton gradient across the membrane. The B chain is a regulatory subunit. The protein is A-type ATP synthase subunit B of Nitrosopumilus maritimus (strain SCM1).